A 271-amino-acid chain; its full sequence is Small ribosomal subunit protein uS2 (271 aa).

The segment at 223 to 271 (RALAGSEEGEATEEVTPASEAEKQEVLAEAMSEEGDALQESEVVEEEEK) is disordered. Acidic residues predominate over residues 253–271 (MSEEGDALQESEVVEEEEK).

The protein belongs to the universal ribosomal protein uS2 family.

The sequence is that of Small ribosomal subunit protein uS2 from Wolinella succinogenes (strain ATCC 29543 / DSM 1740 / CCUG 13145 / JCM 31913 / LMG 7466 / NCTC 11488 / FDC 602W) (Vibrio succinogenes).